Reading from the N-terminus, the 868-residue chain is MASLDNLVARYQRCFNDQSLKNSTIELEIRFQQINFLLFKTVYEALVAQEIPSTISHSIRCIKKVHHENHCREKILPSENLYFKKQPLMFFKFSEPASLGCKVSLAIEQPIRKFILDSSVLVRLKNRTTFRVSELWKIELTIVKQLMGSEVSAKLTAFKTLLFDTPEQQTTKNMMSLINPDDEYLYEIEIEYTGKPESLTAADIIKIKNTVLTLISPNHLMLTAYHQAIEFIASHILSSEILLARIKSGKWGLKRLLPQVKSMTKADYMKFYPPVGYYITDKADGIRGIAVIQDTQIYVVADQLYSLGTTGIEPLKPTILDGEFMPEKKEFYGFDVIMYEGNLLTQQGFETRIESLSKGIKVLQAFNIKAEMKPFISLTSADPNVLLKNFESIFKKKTRPYSIDGIILVEPGNSYLNTNTFKWKPTWDNTLDFLVRKCPESLNVPEYAPKKGFSLHLLFVGISGELFKKLALNWCPGYTKLFPVTQRNQNYFPVQFQPSDFPLAFLYYHPDTSSFSDIDGKVLEMRCLKREINHVSWEIVKIREDRQQDLKTGGYFGNDFKTAELTWLNYMDPFSFEELAKGPSGMYFAGAKTGIYRAQTALISFIKQEIIQKISHQSWVIDLGIGKGQDLGRYLDAGVRHLVGIDKDQTALAELVYRKFSHATTRQHKHATNIYVLHQDLAEPAKEISEKVHQIYGFPKEGASSIVSNLFIHYLMKNTQQVENLAVLCHKLLQPGGMVWFTTMLGERVLELLHENRIELNEVWEARENEVVKFAIKRLFKEDILQETGQEIGVLLPFSNGDFYNEYLVNTAFLIKIFKHHGFSLVQKQSFKDWIPEFQNFSKSLYKILTEADKTWTSLFGFICLRKN.

Catalysis depends on lysine 282, which acts as the N6-GMP-lysine intermediate. Residues 594–868 (GIYRAQTALI…LFGFICLRKN (275 aa)) enclose the mRNA cap 0 methyltransferase domain. S-adenosyl-L-methionine contacts are provided by residues lysine 607, glycine 624, aspartate 646, and 710-712 (LFI).

In the N-terminal section; belongs to the dsDNA virus mRNA guanylyltransferase family. It in the C-terminal section; belongs to the class I-like SAM-binding methyltransferase superfamily. mRNA cap 0 methyltransferase family. In terms of assembly, part of the viral DNA-directed RNA polymerase that consists of 8 polII-like subunits (RPB1, RPB2, RPB3, RPB5, RPB6, RPB7, RPB9, RPB10), a capping enzyme and a termination factor.

The protein localises to the virion. It catalyses the reaction a 5'-end triphospho-ribonucleoside in mRNA + H2O = a 5'-end diphospho-ribonucleoside in mRNA + phosphate + H(+). It carries out the reaction a 5'-end diphospho-ribonucleoside in mRNA + GTP + H(+) = a 5'-end (5'-triphosphoguanosine)-ribonucleoside in mRNA + diphosphate. The enzyme catalyses a 5'-end (5'-triphosphoguanosine)-ribonucleoside in mRNA + S-adenosyl-L-methionine = a 5'-end (N(7)-methyl 5'-triphosphoguanosine)-ribonucleoside in mRNA + S-adenosyl-L-homocysteine. The protein operates within mRNA processing; mRNA capping. Probably catalyzes the second reaction in the mRNA cap formation pathway. Forms a covalent complex with GTP. This Ornithodoros (relapsing fever ticks) protein is mRNA-capping enzyme.